The primary structure comprises 479 residues: mRNA export factor ICP27 homolog (479 aa).

Residues methionine 1 to serine 15 show a composition bias toward low complexity. Disordered regions lie at residues methionine 1–valine 77 and lysine 91–tryptophan 210. Over residues threonine 35–glycine 44 the composition is skewed to acidic residues. Residues aspartate 61–histidine 146 form a nuclear export signal and interaction with host NXF1 region. The interval lysine 127–arginine 130 is nuclear localization signal. Positions glutamate 132–glycine 142 are enriched in basic and acidic residues. Residues lysine 143 to arginine 145 are nuclear localization signal. Residues cysteine 354, histidine 445, cysteine 449, and cysteine 454 each contribute to the Zn(2+) site. A CHC2-type zinc finger spans residues cysteine 354–cysteine 454.

It belongs to the HHV-1 ICP27 protein family. In terms of assembly, interacts with host XPO1 and with the XPO1 export pathway components small GTPase RAN and nucleoporin NUP214. Interacts with host SPEN, OTT1 and OTT3. Interacts with host SRSF1, SRSF3, SRSF7 and SRPK1. Interacts with host DHX9; this interaction may have an inhibitory effect on virion production. Interacts (via N-terminus) with host NXF1; this interaction plays a role in mRNA export. Post-translationally, phosphorylated by cellular protein kinase CK2.

It is found in the host nucleus. Its subcellular location is the host cytoplasm. Its function is as follows. Promotes the nuclear export of a subset of early and late viral mRNAs by interacting with mRNAs and cellular export proteins. Additionally may prevent the establishment of cellular antiviral state, by acting as an alternative splicing factor for cellular RNAs such as STAT1, resulting in a STAT1 mRNA incapable of producing the STAT1alpha isoform. In Homo sapiens (Human), this protein is mRNA export factor ICP27 homolog.